The chain runs to 195 residues: Dual-action ribosomal maturation protein DarP (195 aa).

The protein belongs to the DarP family.

The protein localises to the cytoplasm. Functionally, member of a network of 50S ribosomal subunit biogenesis factors which assembles along the 30S-50S interface, preventing incorrect 23S rRNA structures from forming. Promotes peptidyl transferase center (PTC) maturation. In Stenotrophomonas maltophilia (strain K279a), this protein is Dual-action ribosomal maturation protein DarP.